We begin with the raw amino-acid sequence, 360 residues long: Photosystem II protein D1 (360 aa).

The next 3 membrane-spanning stretches (helical) occupy residues Tyr-29–Thr-46, His-118–Leu-133, and Trp-142–Ala-156. Chlorophyll a is bound at residue His-118. Tyr-126 serves as a coordination point for pheophytin a. [CaMn4O5] cluster-binding residues include Asp-170 and Glu-189. Residues Phe-197–Leu-218 form a helical membrane-spanning segment. Residue His-198 coordinates chlorophyll a. Residues His-215 and Ser-264–Phe-265 contribute to the a quinone site. Position 215 (His-215) interacts with Fe cation. His-272 lines the Fe cation pocket. Residues Phe-274–Ile-288 traverse the membrane as a helical segment. The [CaMn4O5] cluster site is built by His-332, Glu-333, Asp-342, and Ala-344. The propeptide occupies Asp-345–Ser-360.

The protein belongs to the reaction center PufL/M/PsbA/D family. In terms of assembly, PSII is composed of 1 copy each of membrane proteins PsbA, PsbB, PsbC, PsbD, PsbE, PsbF, PsbH, PsbI, PsbJ, PsbK, PsbL, PsbM, PsbT, PsbY, PsbZ, Psb30/Ycf12, at least 3 peripheral proteins of the oxygen-evolving complex and a large number of cofactors. It forms dimeric complexes. The cofactor is The D1/D2 heterodimer binds P680, chlorophylls that are the primary electron donor of PSII, and subsequent electron acceptors. It shares a non-heme iron and each subunit binds pheophytin, quinone, additional chlorophylls, carotenoids and lipids. D1 provides most of the ligands for the Mn4-Ca-O5 cluster of the oxygen-evolving complex (OEC). There is also a Cl(-1) ion associated with D1 and D2, which is required for oxygen evolution. The PSII complex binds additional chlorophylls, carotenoids and specific lipids.. In terms of processing, tyr-161 forms a radical intermediate that is referred to as redox-active TyrZ, YZ or Y-Z.

It is found in the plastid. The protein resides in the chloroplast thylakoid membrane. The enzyme catalyses 2 a plastoquinone + 4 hnu + 2 H2O = 2 a plastoquinol + O2. In terms of biological role, photosystem II (PSII) is a light-driven water:plastoquinone oxidoreductase that uses light energy to abstract electrons from H(2)O, generating O(2) and a proton gradient subsequently used for ATP formation. It consists of a core antenna complex that captures photons, and an electron transfer chain that converts photonic excitation into a charge separation. The D1/D2 (PsbA/PsbD) reaction center heterodimer binds P680, the primary electron donor of PSII as well as several subsequent electron acceptors. In Cyanidium caldarium (Red alga), this protein is Photosystem II protein D1.